The following is a 239-amino-acid chain: Heptaprenylglyceryl phosphate synthase (239 aa).

Position 12 (Lys12) interacts with sn-glycerol 1-phosphate. Mg(2+) is bound by residues Asp14 and Thr40. Residues 159–164 (YLEYSG), Gly189, and 209–210 (GN) contribute to the sn-glycerol 1-phosphate site.

It belongs to the GGGP/HepGP synthase family. Group I subfamily. Homodimer. The cofactor is Mg(2+).

The enzyme catalyses sn-glycerol 1-phosphate + all-trans-heptaprenyl diphosphate = 3-heptaprenyl-sn-glycero-1-phosphate + diphosphate. Its pathway is membrane lipid metabolism; glycerophospholipid metabolism. Its function is as follows. Prenyltransferase that catalyzes in vivo the transfer of the heptaprenyl moiety of heptaprenyl pyrophosphate (HepPP; 35 carbon atoms) to the C3 hydroxyl of sn-glycerol-1-phosphate (G1P), producing heptaprenylglyceryl phosphate (HepGP). This reaction is an ether-bond-formation step in the biosynthesis of archaea-type G1P-based membrane lipids found in Bacillales. To a much lesser extent, is also able to use geranylgeranyl diphosphate (GGPP; C20) as the prenyl donor. This is Heptaprenylglyceryl phosphate synthase from Geobacillus kaustophilus (strain HTA426).